We begin with the raw amino-acid sequence, 414 residues long: O-methyltransferase sirM (414 aa).

Asp270 provides a ligand contact to S-adenosyl-L-methionine. The Proton acceptor role is filled by His321.

The protein belongs to the class I-like SAM-binding methyltransferase superfamily. Cation-independent O-methyltransferase family. COMT subfamily.

It functions in the pathway mycotoxin biosynthesis. Functionally, O-methyltransferase; part of the gene cluster that mediates the biosynthesis of sirodesmin PL, an epipolythiodioxopiperazine (ETP) characterized by a disulfide bridged cyclic dipeptide and that acts as a phytotoxin which is involved in the blackleg didease of canola. SirD catalyzes the O-prenylation of L-tyrosine (L-Tyr) in the presence of dimethylallyl diphosphate (DMAPP) to yield 4-O-dimethylallyl-L-Tyr, and therefore represents probably the first pathway-specific enzyme in the biosynthesis of sirodesmin PL. 4-O-dimethylallyl-L-Tyr, then undergoes condensation with L-Ser in a reaction catalyzed by the non-ribosomal peptide synthase sirP to form the diketopiperazine (DKP) backbone. Further bishydroxylation of the DKP performed by the cytochrome P450 monooxygenase sirC leads to the production of the intermediate phomamide. This step is essential to form the reactive thiol group required for toxicity of sirodesmin PL. The next steps of sirodesmin biosynthesis are not well understood yet, but some predictions could be made from intermediate compounds identification. Phomamide is converted into phomalizarine via oxidation, probably by sirT. Further oxidation, methylation (by sirM or sirN) and reduction steps convert phomalizarine to deacetyl sirodesmin. Finally, acetyltransferase sirH probably acetylates deacetyl sirodesmin to produce sirodesmin PL. This Leptosphaeria maculans (Blackleg fungus) protein is O-methyltransferase sirM.